Reading from the N-terminus, the 400-residue chain is Large envelope protein (400 aa).

Met-1 bears the N-acetylmethionine mark. Disordered regions lie at residues 1 to 54 and 85 to 116; these read MGGW…HWPE and LTTV…RDSH. Gly-2 is lipidated: N-myristoyl glycine; by host. Residues 2-119 are pre-S1; sequence GGWSSKPRQG…PPLRDSHPQA (118 aa). Positions 2 to 174 are pre-S; it reads GGWSSKPRQG…FSRTGDPAPN (173 aa). At 2–181 the chain is on the virion surface; in external conformation side; it reads GGWSSKPRQG…APNMENTTSG (180 aa). The Intravirion; in internal conformation portion of the chain corresponds to 2–253; sequence GGWSSKPRQG…PGYRWMCLRR (252 aa). Trp-4 carries N-linked (GlcNAc...) asparagine glycosylation. The segment covering 96 to 106 has biased composition (polar residues); sequence STNRQSGRQPT. A pre-S2 region spans residues 120 to 174; it reads MQWNSTTFHQALLDPRVRGLYFPAGGSSSGTVNPVPTTASPISSIFSRTGDPAPN. The helical transmembrane segment at 182 to 202 threads the bilayer; it reads FLGPLLVLQAGFFLLTRILTI. Residues 203–253 lie on the Intravirion; in external conformation side of the membrane; that stretch reads PQSLDSWWTSLNFLGGAPTCPGQNSQSPTSNHSPTSCPPICPGYRWMCLRR. A helical membrane pass occupies residues 254 to 274; the sequence is FIIFLFILLLCLIFLLVLLDY. The Virion surface portion of the chain corresponds to 275-348; that stretch reads QGMLPVCPLL…WASVRFSWLS (74 aa). N-linked (GlcNAc...) asparagine; by host glycosylation occurs at Asn-320. Residues 349–369 traverse the membrane as a helical segment; sequence LLVPFVQWFAGLSPTVWLSVI. The Intravirion portion of the chain corresponds to 370-375; sequence WMMWYW. A helical membrane pass occupies residues 376–398; sequence GPSLYNILSPFLPLLPIFFCLWV. Residues 399 to 400 are Virion surface-facing; sequence YI.

This sequence belongs to the orthohepadnavirus major surface antigen family. In terms of assembly, in its internal form (Li-HBsAg), interacts with the capsid protein and with the isoform S. Interacts with host chaperone CANX. As to quaternary structure, associates with host chaperone CANX through its pre-S2 N glycan; this association may be essential for isoform M proper secretion. Interacts with isoform L. Interacts with the antigens of satellite virus HDV (HDVAgs); this interaction is required for encapsidation of HDV genomic RNA. Post-translationally, isoform M is N-terminally acetylated by host at a ratio of 90%, and N-glycosylated by host at the pre-S2 region. In terms of processing, myristoylated.

It is found in the virion membrane. Its function is as follows. The large envelope protein exists in two topological conformations, one which is termed 'external' or Le-HBsAg and the other 'internal' or Li-HBsAg. In its external conformation the protein attaches the virus to cell receptors and thereby initiating infection. This interaction determines the species specificity and liver tropism. This attachment induces virion internalization predominantly through caveolin-mediated endocytosis. The large envelope protein also assures fusion between virion membrane and endosomal membrane. In its internal conformation the protein plays a role in virion morphogenesis and mediates the contact with the nucleocapsid like a matrix protein. The middle envelope protein plays an important role in the budding of the virion. It is involved in the induction of budding in a nucleocapsid independent way. In this process the majority of envelope proteins bud to form subviral lipoprotein particles of 22 nm of diameter that do not contain a nucleocapsid. The chain is Large envelope protein from Homo sapiens (Human).